Reading from the N-terminus, the 317-residue chain is Ferrochelatase (317 aa).

Fe cation-binding residues include H192 and E271.

Belongs to the ferrochelatase family.

Its subcellular location is the cytoplasm. The enzyme catalyses heme b + 2 H(+) = protoporphyrin IX + Fe(2+). Its pathway is porphyrin-containing compound metabolism; protoheme biosynthesis; protoheme from protoporphyrin-IX: step 1/1. Functionally, catalyzes the ferrous insertion into protoporphyrin IX. In Geobacter metallireducens (strain ATCC 53774 / DSM 7210 / GS-15), this protein is Ferrochelatase.